The primary structure comprises 746 residues: Polyribonucleotide nucleotidyltransferase (746 aa).

Residues D519 and D525 each contribute to the Mg(2+) site. Residues 585-644 (PRVIAVKIPVDKIGEVIGPKGKMINQIQEDTGADISIEDDGTVYIGATNGPSADAARSAI) form the KH domain. Residues 656–728 (GERYLGTVVK…DRGKLSLSPV (73 aa)) form the S1 motif domain.

Belongs to the polyribonucleotide nucleotidyltransferase family. It depends on Mg(2+) as a cofactor.

It is found in the cytoplasm. The catalysed reaction is RNA(n+1) + phosphate = RNA(n) + a ribonucleoside 5'-diphosphate. Involved in mRNA degradation. Catalyzes the phosphorolysis of single-stranded polyribonucleotides processively in the 3'- to 5'-direction. This is Polyribonucleotide nucleotidyltransferase from Arthrobacter sp. (strain FB24).